A 219-amino-acid polypeptide reads, in one-letter code: Cytidylate kinase (219 aa).

Residue 10–18 (GPAAAGKST) coordinates ATP.

This sequence belongs to the cytidylate kinase family. Type 1 subfamily.

It localises to the cytoplasm. The enzyme catalyses CMP + ATP = CDP + ADP. It catalyses the reaction dCMP + ATP = dCDP + ADP. In Staphylococcus aureus (strain JH9), this protein is Cytidylate kinase.